The following is a 514-amino-acid chain: MNLQEEIKKRRTFAIISHPDAGKTTITEQLLYFGGEIREAGTVKGKKTGTFAKSDWMDIEKQRGISVTSSVMQFDYDGKRVNILDTPGHEDFSEDTYRTLMAVDAAVMVVDSAKGIEAQTKKLFEVVKHRGIPVFTFMNKLDRDGREPLDLLQELEEVLGIASYPMNWPIGMGKAFEGLYDLYNQRLELYKGDERFASLEDGDKLFGSNPFYEQVKEDIELLNEAGNEFSEEAILAGDLTPVFFGSALTNFGVQTFLETFLKFAPEPHGHKKTDGEIVDPYDKDFSGFVFKIQANMDPRHRDRIAFVRIVSGEFERGMSVNLPRTGKTAKLSNVTQFMAESRENVTNAVAGDIIGVYDTGTYQVGDTLTVGKNKFEFEPLPTFTPEIFMKVSAKNVMKQKSFHKGIEQLVQEGAIQLYTNYQTGEYMLGAVGQLQFEVFKHRMEGEYNAEVVMTPMGKKTVRWISPDDLDERMSSSRNILAKDRFDQPVFLFENDFALRWFADKYPDVKLEEKM.

The tr-type G domain maps to 8 to 268; it reads KKRRTFAIIS…TFLKFAPEPH (261 aa). Residues 17-24, 85-89, and 139-142 contribute to the GTP site; these read SHPDAGKT, DTPGH, and NKLD.

This sequence belongs to the TRAFAC class translation factor GTPase superfamily. Classic translation factor GTPase family. PrfC subfamily.

It is found in the cytoplasm. Functionally, increases the formation of ribosomal termination complexes and stimulates activities of RF-1 and RF-2. It binds guanine nucleotides and has strong preference for UGA stop codons. It may interact directly with the ribosome. The stimulation of RF-1 and RF-2 is significantly reduced by GTP and GDP, but not by GMP. The polypeptide is Peptide chain release factor 3 (Streptococcus gordonii (strain Challis / ATCC 35105 / BCRC 15272 / CH1 / DL1 / V288)).